Here is a 692-residue protein sequence, read N- to C-terminus: Furin-like protease kpc-1 (692 aa).

Positions 1–33 are cleaved as a signal peptide; it reads MSNISWYRHCSVRLQLVTLALFLLLGSASLGSA. Asn3 is a glycosylation site (N-linked (GlcNAc...) asparagine). The propeptide occupies 34 to 139; that stretch reads HIDEEFEDDV…QQVAKRRVKR (106 aa). The Lumenal segment spans residues 140–670; the sequence is GYRRIRRHTD…RSVQMEATSS (531 aa). The segment at 152 to 177 is disordered; sequence DIFEEDDDGTQISKSRNRKHPDPNDP. Position 176 (Asp176) interacts with Ca(2+). One can recognise a Peptidase S8 domain in the interval 182-503; that stretch reads MWYLNRGEHH…YGLMDAGAMV (322 aa). Residue Asp221 is the Charge relay system of the active site. Substrate is bound at residue Asp222. Asp230, Asp242, Asp247, and Asp249 together coordinate Ca(2+). The segment at 230 to 249 is disordered; the sequence is DISPNYDERASYDVNDRDND. Substrate is bound at residue 259-260; that stretch reads EN. The active-site Charge relay system is His262. A Ca(2+)-binding site is contributed by Ile273. An N-linked (GlcNAc...) asparagine glycan is attached at Asn275. Residues Asn276, Leu278, and Ile280 each contribute to the Ca(2+) site. 2 cysteine pairs are disulfide-bonded: Cys279–Cys428 and Cys371–Cys401. Residues Glu304, 321–326, Asp332, and 360–363 contribute to the substrate site; these read SWGPDD and ASGN. Asp326 lines the Ca(2+) pocket. Residue Asp369 coordinates Ca(2+). Substrate-binding residues include Asp374 and Tyr376. Glu399 serves as a coordination point for Ca(2+). The active-site Charge relay system is Ser436. Ser436 is a substrate binding site. Residues Asn455 and Asn487 are each glycosylated (N-linked (GlcNAc...) asparagine). The 135-residue stretch at 512–646 folds into the P/Homo B domain; that stretch reads VDEQHRCRQF…ELVLYGTDRE (135 aa). A disulfide bond links Cys518 and Cys544. The Cell attachment site signature appears at 570–572; sequence RGD. The helical transmembrane segment at 671–692 threads the bilayer; that stretch reads GTQYSIFHVITLVILTFSQILY.

Belongs to the peptidase S8 family. Furin subfamily. Interacts (via extracellular domain) with receptor dma-1 (via extracellular domain); the interaction promotes dma-1 internalization. Ca(2+) is required as a cofactor. Expressed in the nervous system including the ventral nerve cord, the nerve ring and the retrovesicular ganglion, and in epithelial cells. Expressed in IL2 neurons. Expressed in PVD mechanosensory neurons. Expressed in pharynx with strong expression in the g2 pharyngeal gland cells and vpi pharyngeal intestinal valve cells. Expressed in intestine.

It localises to the cell membrane. The protein resides in the perikaryon. The protein localises to the cell projection. It is found in the axon. Functionally, furin-like protease which cleaves proproteins at the RX(K/R)R consensus motif. During neuronal development, regulates the formation and extension of dendrite branches and cellular positioning of various type of neurons. Together with chin-1 and cdc-42, plays a role in the development of the neuropil and is required for the guidance of axons from neurons, including SubL pioneer neurons and AIY interneurons, into the nerve ring. Its role in axon guidance in glia and pioneer neurons may be through ensuring the fmi-1 protein is correctly localized to the nerve ring. Promotes the formation, extension and self-avoidance of dendritic branches of PVD and FLP mechanosensory neurons. In PVD neurons, regulates plasma membrane levels of branching receptor dma-1 by targeting it to late endosomes and thus promotes normal dendrite branching and dendrite self-avoidance. Also controls dendrite extension in AIY and D-type motoneurons, dendrite branching in AQR sensory neurons and VC4/5 motoneurons, the normal number of dendritic branches in AVL neurons and the positioning of HSN and ALM/PLM neurons. Dispensable for maintaining dendrite branching in adults. Also regulates dauer-specific dendritic branching of IL2 neurons and dauer-specific nictation behavior. Under adverse environmental conditions, may promote dauer formation by processing insulin-like proteins ins-1 and ins-18, two daf-2/InsR antagonists. This is Furin-like protease kpc-1 from Caenorhabditis elegans.